Reading from the N-terminus, the 453-residue chain is Serine/threonine-protein kinase VRK3 (453 aa).

The disordered stretch occupies residues 30–123 (EDGGTQSAVT…QSPQTLKRTR (94 aa)). Over residues 33–46 (GTQSAVTPHVSSVP) the composition is skewed to polar residues. A Nuclear localization signal motif is present at residues 49–64 (RRDLNSSFETSPKKVK). 6 positions are modified to phosphoserine: Ser-54, Ser-55, Ser-59, Ser-82, Ser-83, and Ser-108. The span at 81-101 (DSSGSDNTLTSPDRATGTRSR) shows a compositional bias: polar residues. The span at 109 to 123 (PLSNRQSPQTLKRTR) shows a compositional bias: polar residues. Residues 125-436 (TTSLQALATG…TLRNSLEALL (312 aa)) form the Protein kinase domain.

Belongs to the protein kinase superfamily. CK1 Ser/Thr protein kinase family. VRK subfamily. In terms of assembly, interacts with DUSP3. Interacts with RAN. Interacts with HSP70/HSPA1A. Post-translationally, phosphorylated at Ser-108 by CDK5; leading to protection of the cell against H2O2-induced apoptosis. In terms of processing, ubiquitinated by RNF144A. As to expression, expressed in liver, kidney, muscle, thymus, and bone marrow. Weakly expressed in spleen.

The protein localises to the nucleus. It localises to the cytoplasm. The catalysed reaction is L-seryl-[protein] + ATP = O-phospho-L-seryl-[protein] + ADP + H(+). Functionally, plays a role in the regulation of the cell cycle by phosphorylating the nuclear envelope protein barrier-to-autointegration factor/BAF that is required for disassembly and reassembly, respectively, of the nuclear envelope during mitosis. Under normal physiological conditions, negatively regulates ERK activity along with VHR phosphatase in the nucleus, causing timely and transient action of ERK. Stress conditions activate CDK5 which phosphorylates VRK3 to increase VHR phosphatase activity and suppress prolonged ERK activation that causes cell death. For example, upon glutamate induction, promotes nuclear localization of HSP70/HSPA1A to inhibit ERK activation via VHR phosphatase. The protein is Serine/threonine-protein kinase VRK3 (Vrk3) of Mus musculus (Mouse).